The chain runs to 257 residues: Imidazole glycerol phosphate synthase subunit HisF (257 aa).

Catalysis depends on residues Asp-12 and Asp-131.

This sequence belongs to the HisA/HisF family. In terms of assembly, heterodimer of HisH and HisF.

It localises to the cytoplasm. It catalyses the reaction 5-[(5-phospho-1-deoxy-D-ribulos-1-ylimino)methylamino]-1-(5-phospho-beta-D-ribosyl)imidazole-4-carboxamide + L-glutamine = D-erythro-1-(imidazol-4-yl)glycerol 3-phosphate + 5-amino-1-(5-phospho-beta-D-ribosyl)imidazole-4-carboxamide + L-glutamate + H(+). The protein operates within amino-acid biosynthesis; L-histidine biosynthesis; L-histidine from 5-phospho-alpha-D-ribose 1-diphosphate: step 5/9. Functionally, IGPS catalyzes the conversion of PRFAR and glutamine to IGP, AICAR and glutamate. The HisF subunit catalyzes the cyclization activity that produces IGP and AICAR from PRFAR using the ammonia provided by the HisH subunit. The sequence is that of Imidazole glycerol phosphate synthase subunit HisF from Burkholderia multivorans (strain ATCC 17616 / 249).